The chain runs to 158 residues: Snaclec mucrocetin subunit alpha (158 aa).

Residues 1–23 (MGRFIFVSFGLLVVFLSLSGTGA) form the signal peptide. Cystine bridges form between cysteine 27/cysteine 38, cysteine 55/cysteine 152, and cysteine 127/cysteine 144. Residues 34 to 153 (YDRYCYQAFS…CGRENPFVCK (120 aa)) enclose the C-type lectin domain.

It belongs to the snaclec family. Tetramer of heterodimers of alpha and beta subunits (alphabeta)(4); disulfide-linked. In terms of tissue distribution, expressed by the venom gland.

It is found in the secreted. Platelet-agglutinating factor that acts in a vWF-independent manner. Binds specifically to platelet GPIbalpha (GP1BA) to a distinct binding site from that of flavocetin-A. This chain is Snaclec mucrocetin subunit alpha, found in Protobothrops mucrosquamatus (Taiwan habu).